Here is a 526-residue protein sequence, read N- to C-terminus: Bifunctional purine biosynthesis protein PurH (526 aa).

In terms of domain architecture, MGS-like spans 1–145 (MIRTALLSVS…KNHQDVTVLI (145 aa)).

This sequence belongs to the PurH family.

It carries out the reaction (6R)-10-formyltetrahydrofolate + 5-amino-1-(5-phospho-beta-D-ribosyl)imidazole-4-carboxamide = 5-formamido-1-(5-phospho-D-ribosyl)imidazole-4-carboxamide + (6S)-5,6,7,8-tetrahydrofolate. The enzyme catalyses IMP + H2O = 5-formamido-1-(5-phospho-D-ribosyl)imidazole-4-carboxamide. The protein operates within purine metabolism; IMP biosynthesis via de novo pathway; 5-formamido-1-(5-phospho-D-ribosyl)imidazole-4-carboxamide from 5-amino-1-(5-phospho-D-ribosyl)imidazole-4-carboxamide (10-formyl THF route): step 1/1. It functions in the pathway purine metabolism; IMP biosynthesis via de novo pathway; IMP from 5-formamido-1-(5-phospho-D-ribosyl)imidazole-4-carboxamide: step 1/1. The sequence is that of Bifunctional purine biosynthesis protein PurH from Polynucleobacter asymbioticus (strain DSM 18221 / CIP 109841 / QLW-P1DMWA-1) (Polynucleobacter necessarius subsp. asymbioticus).